The following is a 445-amino-acid chain: Probable D-serine dehydratase (445 aa).

The residue at position 111 (lysine 111) is an N6-(pyridoxal phosphate)lysine.

Belongs to the serine/threonine dehydratase family. DsdA subfamily. Pyridoxal 5'-phosphate is required as a cofactor.

It catalyses the reaction D-serine = pyruvate + NH4(+). The sequence is that of Probable D-serine dehydratase from Burkholderia pseudomallei (strain 1710b).